Here is a 148-residue protein sequence, read N- to C-terminus: MKVKIKQIYQFEGTSSLPAYSTNGSAGMDLYAAIASPMIIKPHETALVPAGIAISLPYGYEAQIRSRSGLASKFGVIVLNSPGTIDSDYRGELKIIMINLGQKDFQLTPAMRIAQMVIAKYEVISWEIVDDLDETERGEKGFGSSGLK.

Substrate-binding positions include 67–69 (RSG), asparagine 80, 84–86 (TID), and lysine 94.

The protein belongs to the dUTPase family. It depends on Mg(2+) as a cofactor.

It carries out the reaction dUTP + H2O = dUMP + diphosphate + H(+). Its pathway is pyrimidine metabolism; dUMP biosynthesis; dUMP from dCTP (dUTP route): step 2/2. This enzyme is involved in nucleotide metabolism: it produces dUMP, the immediate precursor of thymidine nucleotides and it decreases the intracellular concentration of dUTP so that uracil cannot be incorporated into DNA. The sequence is that of Deoxyuridine 5'-triphosphate nucleotidohydrolase from Orientia tsutsugamushi (strain Ikeda) (Rickettsia tsutsugamushi).